A 711-amino-acid polypeptide reads, in one-letter code: Zinc finger protein 175 (711 aa).

Over residues 1-11 (MPADVNLSQKP) the composition is skewed to polar residues. The disordered stretch occupies residues 1-21 (MPADVNLSQKPQVLGPEKQDG). The KRAB domain maps to 27-98 (VSFEDVTVDF…EAEVSHQRCQ (72 aa)). The segment at 279 to 301 (DGCSECGGSFTQKSHLFAQQRIH) adopts a C2H2-type 1; atypical zinc-finger fold. The C2H2-type 2; atypical zinc-finger motif lies at 307-329 (HECGKCGKAFMPQLKLSVYLTDH). The C2H2-type 3 zinc-finger motif lies at 335–357 (CICKECGKVFIQRSELLTHQKTH). Residues 359–362 (RKKP) carry the Nuclear localization signal motif. C2H2-type zinc fingers lie at residues 363–385 (YKCH…QRTH), 391–413 (YECS…QKIH), 419–441 (YACS…QRIH), 447–469 (YVCI…QRSH), 475–497 (YQCH…HRIH), 503–525 (YECS…QKIH), 531–553 (HVCS…QRIH), 559–581 (YKCS…QRIH), 587–609 (YVCT…QITH), 615–637 (FVCY…QRTH), 643–665 (YECL…QRIH), and 671–693 (YVCS…QTTH).

It belongs to the krueppel C2H2-type zinc-finger protein family. As to expression, ubiquitous.

It localises to the cytoplasm. The protein localises to the nucleus. Functionally, down-regulates the expression of several chemokine receptors. Interferes with HIV-1 replication by suppressing Tat-induced viral LTR promoter activity. The chain is Zinc finger protein 175 (ZNF175) from Homo sapiens (Human).